Consider the following 469-residue polypeptide: 3-isopropylmalate dehydratase large subunit (469 aa).

Residues Cys-350, Cys-410, and Cys-413 each coordinate [4Fe-4S] cluster.

It belongs to the aconitase/IPM isomerase family. LeuC type 1 subfamily. Heterodimer of LeuC and LeuD. Requires [4Fe-4S] cluster as cofactor.

The catalysed reaction is (2R,3S)-3-isopropylmalate = (2S)-2-isopropylmalate. The protein operates within amino-acid biosynthesis; L-leucine biosynthesis; L-leucine from 3-methyl-2-oxobutanoate: step 2/4. Its function is as follows. Catalyzes the isomerization between 2-isopropylmalate and 3-isopropylmalate, via the formation of 2-isopropylmaleate. The protein is 3-isopropylmalate dehydratase large subunit of Agrobacterium fabrum (strain C58 / ATCC 33970) (Agrobacterium tumefaciens (strain C58)).